Consider the following 159-residue polypeptide: Large ribosomal subunit protein uL11 (159 aa).

It belongs to the universal ribosomal protein uL11 family. Part of the ribosomal stalk of the 50S ribosomal subunit. Interacts with L10 and the large rRNA to form the base of the stalk. L10 forms an elongated spine to which L12 dimers bind in a sequential fashion forming a multimeric L10(L12)X complex.

Its function is as follows. Forms part of the ribosomal stalk which helps the ribosome interact with GTP-bound translation factors. The protein is Large ribosomal subunit protein uL11 of Methanothrix thermoacetophila (strain DSM 6194 / JCM 14653 / NBRC 101360 / PT) (Methanosaeta thermophila).